A 555-amino-acid chain; its full sequence is CTP synthase (555 aa).

The segment at 1–271 is amidoligase domain; that stretch reads MVKRGKKTKY…DDKLAELFNI (271 aa). Serine 19 contacts CTP. Serine 19 contacts UTP. ATP is bound by residues 20-25 and aspartate 77; that span reads SLGKGL. The Mg(2+) site is built by aspartate 77 and glutamate 145. CTP contacts are provided by residues 152-154, 192-197, and lysine 228; these read DIE and KTKPTQ. UTP is bound by residues 192-197 and lysine 228; that span reads KTKPTQ. The Glutamine amidotransferase type-1 domain maps to 297–537; sequence RIGIVGKYVE…VKAALEHRDA (241 aa). Position 358 (glycine 358) interacts with L-glutamine. Cysteine 385 serves as the catalytic Nucleophile; for glutamine hydrolysis. Residues 386–389, glutamate 409, and arginine 466 each bind L-glutamine; that span reads LGLQ. Active-site residues include histidine 510 and glutamate 512. The interval 535–555 is disordered; sequence RDAQQRQPPAEVKKLAVGKNG.

The protein belongs to the CTP synthase family. In terms of assembly, homotetramer.

The enzyme catalyses UTP + L-glutamine + ATP + H2O = CTP + L-glutamate + ADP + phosphate + 2 H(+). It catalyses the reaction L-glutamine + H2O = L-glutamate + NH4(+). The catalysed reaction is UTP + NH4(+) + ATP = CTP + ADP + phosphate + 2 H(+). It participates in pyrimidine metabolism; CTP biosynthesis via de novo pathway; CTP from UDP: step 2/2. Its activity is regulated as follows. Allosterically activated by GTP, when glutamine is the substrate; GTP has no effect on the reaction when ammonia is the substrate. The allosteric effector GTP functions by stabilizing the protein conformation that binds the tetrahedral intermediate(s) formed during glutamine hydrolysis. Inhibited by the product CTP, via allosteric rather than competitive inhibition. In terms of biological role, catalyzes the ATP-dependent amination of UTP to CTP with either L-glutamine or ammonia as the source of nitrogen. Regulates intracellular CTP levels through interactions with the four ribonucleotide triphosphates. This chain is CTP synthase, found in Anaeromyxobacter dehalogenans (strain 2CP-1 / ATCC BAA-258).